The primary structure comprises 1382 residues: Hepatocyte growth factor receptor (1382 aa).

The N-terminal stretch at 1–24 (MKASAVLAPGILALLFTLVQGNDG) is a signal peptide. Residues 25-933 (ECQEALAKSE…VIVQPDQNFT (909 aa)) lie on the Extracellular side of the membrane. The Sema domain maps to 27–516 (QEALAKSEMN…TGKKITKIPL (490 aa)). N-linked (GlcNAc...) asparagine glycosylation is found at asparagine 45, asparagine 100, and asparagine 106. Cystine bridges form between cysteine 95–cysteine 101, cysteine 98–cysteine 160, cysteine 133–cysteine 141, and cysteine 173–cysteine 176. N-linked (GlcNAc...) asparagine glycosylation is found at asparagine 203 and asparagine 359. Disulfide bonds link cysteine 299–cysteine 364 and cysteine 386–cysteine 398. 2 N-linked (GlcNAc...) asparagine glycosylation sites follow: asparagine 400 and asparagine 406. Cystine bridges form between cysteine 521–cysteine 539, cysteine 527–cysteine 562, cysteine 530–cysteine 546, and cysteine 542–cysteine 552. 3 IPT/TIG domains span residues 564–656 (PAIH…FSYV), 658–740 (PVIT…FSYR), and 743–837 (PIVH…LIYV). Residue threonine 583 is glycosylated (O-linked (Man) threonine). Residues asparagine 608 and asparagine 636 are each glycosylated (N-linked (GlcNAc...) asparagine). Residues threonine 677 and threonine 762 are each glycosylated (O-linked (Man) threonine). Residues asparagine 786, asparagine 880, and asparagine 931 are each glycosylated (N-linked (GlcNAc...) asparagine). A helical membrane pass occupies residues 934 to 956 (GLIVGVVSISIILLLLLGLFLWM). Over 957–1382 (KKRKQIKDLG…QDNVNGEVDT (426 aa)) the chain is Cytoplasmic. Serine 967 carries the phosphoserine modification. Threonine 978 is modified (phosphothreonine). Serine 991, serine 998, and serine 1001 each carry phosphoserine. Tyrosine 1004 is subject to Phosphotyrosine. The Protein kinase domain maps to 1079-1346 (VHFNEVIGRG…RISAIFSTFI (268 aa)). Residues 1085–1093 (IGRGHFGCV) and lysine 1111 each bind ATP. The Proton acceptor role is filled by aspartate 1205. The tract at residues 1213-1382 (LDEKFTVKVA…QDNVNGEVDT (170 aa)) is interaction with RANBP9. Phosphotyrosine is present on tyrosine 1231. Tyrosine 1235 and tyrosine 1236 each carry phosphotyrosine; by autocatalysis. Threonine 1290 is modified (phosphothreonine). The tract at residues 1321–1360 (WHPKAEMRPSFSELVSRISAIFSTFIGEHYVHVNATYVNV) is interaction with MUC20. Residues tyrosine 1350 and tyrosine 1357 each carry the phosphotyrosine; by autocatalysis modification. Position 1366 is a phosphotyrosine (tyrosine 1366).

The protein belongs to the protein kinase superfamily. Tyr protein kinase family. Heterodimer made of an alpha chain (50 kDa) and a beta chain (145 kDa) which are disulfide linked. Binds PLXNB1. Interacts when phosphorylated with downstream effectors including STAT3, PIK3R1, SRC, PCLG1, GRB2 and GAB1. Interacts with SPSB1, SPSB2 and SPSB4. Interacts with INPP5D/SHIP1. When phosphorylated at Tyr-1357, interacts with INPPL1/SHIP2. Interacts with RANBP9 and RANBP10, as well as SPSB1, SPSB2, SPSB3 and SPSB4. SPSB1 binding occurs in the presence and in the absence of HGF, however HGF treatment has a positive effect on this interaction. Interacts with MUC20; prevents interaction with GRB2 and suppresses hepatocyte growth factor-induced cell proliferation. Interacts with GRB10. Interacts with PTPN1 and PTPN2. Interacts with HSP90AA1 and HSP90AB1; the interaction suppresses MET kinase activity. Interacts with tensin TNS3. Interacts (when phosphorylated) with tensin TNS4 (via SH2 domain); the interaction increases MET protein stability by inhibiting MET endocytosis and subsequent lysosomal degradation. In terms of processing, autophosphorylated in response to ligand binding on Tyr-1235 and Tyr-1236 in the kinase domain leading to further phosphorylation of Tyr-1350 and Tyr-1357 in the C-terminal multifunctional docking site. Dephosphorylated by PTPRJ at Tyr-1350 and Tyr-1366. Dephosphorylated by PTPN1 and PTPN2. Post-translationally, ubiquitinated. Ubiquitination by CBL regulates the receptor stability and activity through proteasomal degradation. O-mannosylation of IPT/TIG domains by TMEM260 is required for protein maturation. O-mannosylated residues are composed of single mannose glycans that are not elongated or modified.

The protein resides in the membrane. It catalyses the reaction L-tyrosyl-[protein] + ATP = O-phospho-L-tyrosyl-[protein] + ADP + H(+). With respect to regulation, in its inactive state, the C-terminal tail interacts with the catalytic domain and inhibits the kinase activity. Upon ligand binding, the C-terminal tail is displaced and becomes phosphorylated, thus increasing the kinase activity. Receptor tyrosine kinase that transduces signals from the extracellular matrix into the cytoplasm by binding to hepatocyte growth factor/HGF ligand. Regulates many physiological processes including proliferation, scattering, morphogenesis and survival. Ligand binding at the cell surface induces autophosphorylation of MET on its intracellular domain that provides docking sites for downstream signaling molecules. Following activation by ligand, interacts with the PI3-kinase subunit PIK3R1, PLCG1, SRC, GRB2, STAT3 or the adapter GAB1. Recruitment of these downstream effectors by MET leads to the activation of several signaling cascades including the RAS-ERK, PI3 kinase-AKT, or PLCgamma-PKC. The RAS-ERK activation is associated with the morphogenetic effects while PI3K/AKT coordinates prosurvival effects. During embryonic development, MET signaling plays a role in gastrulation, development and migration of muscles and neuronal precursors, angiogenesis and kidney formation. In adults, participates in wound healing as well as organ regeneration and tissue remodeling. Also promotes differentiation and proliferation of hematopoietic cells. This chain is Hepatocyte growth factor receptor (MET), found in Eulemur macaco macaco (Black lemur).